A 124-amino-acid chain; its full sequence is Holo-[acyl-carrier-protein] synthase (124 aa).

Mg(2+) contacts are provided by Asp-8 and Glu-57.

This sequence belongs to the P-Pant transferase superfamily. AcpS family. Mg(2+) serves as cofactor.

It is found in the cytoplasm. It carries out the reaction apo-[ACP] + CoA = holo-[ACP] + adenosine 3',5'-bisphosphate + H(+). Transfers the 4'-phosphopantetheine moiety from coenzyme A to a Ser of acyl-carrier-protein. The chain is Holo-[acyl-carrier-protein] synthase from Leptospira borgpetersenii serovar Hardjo-bovis (strain JB197).